A 557-amino-acid polypeptide reads, in one-letter code: uncharacterized protein (557 aa).

The DhaL domain maps to 7-206 (SSFIDMLRLG…FACFLEGMLS (200 aa)).

This is an uncharacterized protein from Mycoplasma genitalium (strain ATCC 33530 / DSM 19775 / NCTC 10195 / G37) (Mycoplasmoides genitalium).